The sequence spans 596 residues: DNA polymerase kappa (596 aa).

Residues 85–320 (CVCIDMDAYF…LPIRKVGGIG (236 aa)) enclose the UmuC domain. Residues D89 and D180 each coordinate Mg(2+). The active site involves E181. The UBZ4-type zinc-finger motif lies at 516–545 (TRPCPICGTDVENRLDVMNCHVDECILKVQ). Residues C519, C522, H536, and C540 each contribute to the Zn(2+) site. Residues 559-584 (NKSTQKPERPSTKKRKLQEKRPKAKK) form a disordered region. A compositionally biased stretch (basic residues) spans 570 to 584 (TKKRKLQEKRPKAKK).

The protein belongs to the DNA polymerase type-Y family. Mg(2+) is required as a cofactor. It depends on Mn(2+) as a cofactor.

The protein localises to the nucleus. It carries out the reaction DNA(n) + a 2'-deoxyribonucleoside 5'-triphosphate = DNA(n+1) + diphosphate. In terms of biological role, DNA polymerase specifically involved in DNA repair. Plays an important role in translesion synthesis, where the normal high-fidelity DNA polymerases cannot proceed and DNA synthesis stalls. Depending on the context, it inserts the correct base, but causes frequent base transitions, transversions and frameshifts. Lacks 3'-5' proofreading exonuclease activity. Forms a Schiff base with 5'-deoxyribose phosphate at abasic sites, but does not have lyase activity. This chain is DNA polymerase kappa (polk-1), found in Caenorhabditis elegans.